Here is a 268-residue protein sequence, read N- to C-terminus: Tryptophan synthase alpha chain (268 aa).

Catalysis depends on proton acceptor residues Glu-49 and Asp-60.

The protein belongs to the TrpA family. Tetramer of two alpha and two beta chains.

It catalyses the reaction (1S,2R)-1-C-(indol-3-yl)glycerol 3-phosphate + L-serine = D-glyceraldehyde 3-phosphate + L-tryptophan + H2O. It functions in the pathway amino-acid biosynthesis; L-tryptophan biosynthesis; L-tryptophan from chorismate: step 5/5. The alpha subunit is responsible for the aldol cleavage of indoleglycerol phosphate to indole and glyceraldehyde 3-phosphate. The protein is Tryptophan synthase alpha chain of Shigella dysenteriae serotype 1 (strain Sd197).